The primary structure comprises 178 residues: 2-C-methyl-D-erythritol 2,4-cyclodiphosphate synthase (178 aa).

The a divalent metal cation site is built by aspartate 24, histidine 26, and histidine 61. 24–26 (DSH) provides a ligand contact to 4-CDP-2-C-methyl-D-erythritol 2-phosphate. 150 to 153 (TSGE) is a 4-CDP-2-C-methyl-D-erythritol 2-phosphate binding site.

This sequence belongs to the IspF family. In terms of assembly, homotrimer. Requires a divalent metal cation as cofactor.

The catalysed reaction is 4-CDP-2-C-methyl-D-erythritol 2-phosphate = 2-C-methyl-D-erythritol 2,4-cyclic diphosphate + CMP. The protein operates within isoprenoid biosynthesis; isopentenyl diphosphate biosynthesis via DXP pathway; isopentenyl diphosphate from 1-deoxy-D-xylulose 5-phosphate: step 4/6. Involved in the biosynthesis of isopentenyl diphosphate (IPP) and dimethylallyl diphosphate (DMAPP), two major building blocks of isoprenoid compounds. Catalyzes the conversion of 4-diphosphocytidyl-2-C-methyl-D-erythritol 2-phosphate (CDP-ME2P) to 2-C-methyl-D-erythritol 2,4-cyclodiphosphate (ME-CPP) with a corresponding release of cytidine 5-monophosphate (CMP). The sequence is that of 2-C-methyl-D-erythritol 2,4-cyclodiphosphate synthase from Chlamydia muridarum (strain MoPn / Nigg).